We begin with the raw amino-acid sequence, 77 residues long: Small ribosomal subunit protein uS17 (77 aa).

Belongs to the universal ribosomal protein uS17 family. Part of the 30S ribosomal subunit.

One of the primary rRNA binding proteins, it binds specifically to the 5'-end of 16S ribosomal RNA. This Rickettsia rickettsii (strain Sheila Smith) protein is Small ribosomal subunit protein uS17.